A 229-amino-acid chain; its full sequence is Putative ankyrin repeat protein L148 (229 aa).

ANK repeat units lie at residues 70–95 (ILDYALYFSCGIGNVRIIKEMIPDNY), 96–126 (IGTEKLIFAAIQNDQDSVIDFFASRGFDLRI), 127–156 (NNDYLLRLAAEMNSLKTAKYLVSKGANCQA), and 157–186 (YNNAPLQKASINGHFEMVKFLVENGASVAA).

In Acanthamoeba polyphaga (Amoeba), this protein is Putative ankyrin repeat protein L148.